A 43-amino-acid polypeptide reads, in one-letter code: ACAGLYKKCGKGVNTCCENRPCKCDLAMGNCICKKKFVEFFGG.

Cystine bridges form between Cys-2–Cys-17, Cys-9–Cys-22, Cys-16–Cys-33, and Cys-24–Cys-31. At Gly-43 the chain carries Glycine amide.

In terms of tissue distribution, expressed by the venom gland.

The protein resides in the secreted. Functionally, inhibits high-voltage activated calcium channels. Shifts the voltage-dependence for activation towards hyperpolarized membrane potentials for L- (Cav1), P/Q- (Cav2.1/CACNA1A) and R-type (Cav2.3/CACNA1E) calcium currents. Causes immediate agitation and clockwise gyration, followed by the gradual development of general flaccid paralysis when injected intracerebroventricular into mice at dose levels of 5 ug per mouse. This is Omega-ctenitoxin-Pr1a from Phoneutria reidyi (Brazilian Amazonian armed spider).